A 72-amino-acid polypeptide reads, in one-letter code: Translation initiation factor IF-1 1 (72 aa).

The 72-residue stretch at 1–72 (MAKDDVIQMQ…SRARIVFRAK (72 aa)) folds into the S1-like domain.

It belongs to the IF-1 family. As to quaternary structure, component of the 30S ribosomal translation pre-initiation complex which assembles on the 30S ribosome in the order IF-2 and IF-3, IF-1 and N-formylmethionyl-tRNA(fMet); mRNA recruitment can occur at any time during PIC assembly.

It is found in the cytoplasm. Its function is as follows. One of the essential components for the initiation of protein synthesis. Stabilizes the binding of IF-2 and IF-3 on the 30S subunit to which N-formylmethionyl-tRNA(fMet) subsequently binds. Helps modulate mRNA selection, yielding the 30S pre-initiation complex (PIC). Upon addition of the 50S ribosomal subunit IF-1, IF-2 and IF-3 are released leaving the mature 70S translation initiation complex. This is Translation initiation factor IF-1 1 from Ralstonia nicotianae (strain ATCC BAA-1114 / GMI1000) (Ralstonia solanacearum).